The primary structure comprises 102 residues: Protein V2 (102 aa).

Its function is as follows. May be involved in the regulation of ssDNA versus dsDNA levels. This Beet curly top virus (strain California/Logan) (BCTV) protein is Protein V2.